A 161-amino-acid polypeptide reads, in one-letter code: pEARLI1-like lipid transfer protein 1 (161 aa).

The first 25 residues, 1 to 25 (MASKNSASLALFFALNILFFTLTVA), serve as a signal peptide directing secretion. The stretch at 32–39 (PSPKPKPV) is one A-1 repeat. Residues 32–76 (PSPKPKPVPSPKPKPVQCPPPPRPSVPSPNPRPVTPPRTPGSSGN) are disordered. A compositionally biased stretch (pro residues) spans 33 to 70 (SPKPKPVPSPKPKPVQCPPPPRPSVPSPNPRPVTPPRT). The 2 X 8 AA tandem repeats A of P-S-P-K-P-K-P-V stretch occupies residues 34–49 (PKPKPVPSPKPKPVQC). The stretch at 40-47 (PSPKPKPV) is one A-2 repeat.

This sequence belongs to the plant LTP family. PEARLI1 subfamily. In terms of assembly, self-interacts and binds to DIR1. Interacts with PDLP1.

The protein resides in the secreted. It localises to the cell wall. Its subcellular location is the endoplasmic reticulum. The protein localises to the cell junction. It is found in the plasmodesma. The protein resides in the plastid. It localises to the chloroplast. Its function is as follows. Probable lipid transfer protein (LTP). Seems to control the flowering process and lignin synthesis. Together with DIR1, required for glycerol-3-phosphate- (G3P) and azelaic acid- (AA) induced systemic acquired resistance (SAR). Component of plant systemic immunity involved in priming defenses in a AA-dependent manner, by modulating production and/or translocation of a mobile signal(s) during SAR. Confers resistance to Botrytis cinerea and Pseudomonas syringae pv. tomato DC3000 and PmaDG3. May be involved in induced systemic resistance (ISR) mediated by non-pathogenic bacteria (e.g. P. fluorescens GM30). Prevents electrolyte leakage during freezing damage. This Arabidopsis thaliana (Mouse-ear cress) protein is pEARLI1-like lipid transfer protein 1 (AZI1).